A 649-amino-acid chain; its full sequence is V-type ATP synthase subunit I (649 aa).

A run of 7 helical transmembrane segments spans residues 312 to 332, 360 to 380, 453 to 473, 485 to 505, 520 to 540, 556 to 576, and 593 to 613; these read FFSFFVFFSMIINDAGYGLVF, FMILGLGCVCWGGATTSFFGV, FIDNILMEIALLVGVVHLSLG, IGWVIFMCGAYMYLPIYLQAV, GLVGYYVAFIGLGVAILGGVI, VFSDVLSYLRLYALSLAGAMV, and ILIIIFGHTVNIALSIMGGVI.

Belongs to the V-ATPase 116 kDa subunit family.

It is found in the cell membrane. Produces ATP from ADP in the presence of a proton gradient across the membrane. The polypeptide is V-type ATP synthase subunit I (atpI) (Chlamydia trachomatis serovar D (strain ATCC VR-885 / DSM 19411 / UW-3/Cx)).